We begin with the raw amino-acid sequence, 474 residues long: Synaptotagmin-17 (474 aa).

The tract at residues tryptophan 60–leucine 112 is disordered. Low complexity predominate over residues serine 96–leucine 112. Residues serine 118 and serine 119 each carry the phosphoserine modification. C2 domains follow at residues glutamine 184–lysine 310 and glutamate 321–histidine 455.

This sequence belongs to the synaptotagmin family.

The protein resides in the membrane. Plays a role in dendrite formation by melanocytes. In Pongo abelii (Sumatran orangutan), this protein is Synaptotagmin-17 (SYT17).